Consider the following 271-residue polypeptide: Putative pyruvate, phosphate dikinase regulatory protein (271 aa).

G151–T158 provides a ligand contact to ADP.

It belongs to the pyruvate, phosphate/water dikinase regulatory protein family. PDRP subfamily.

It catalyses the reaction N(tele)-phospho-L-histidyl/L-threonyl-[pyruvate, phosphate dikinase] + ADP = N(tele)-phospho-L-histidyl/O-phospho-L-threonyl-[pyruvate, phosphate dikinase] + AMP + H(+). The enzyme catalyses N(tele)-phospho-L-histidyl/O-phospho-L-threonyl-[pyruvate, phosphate dikinase] + phosphate + H(+) = N(tele)-phospho-L-histidyl/L-threonyl-[pyruvate, phosphate dikinase] + diphosphate. Functionally, bifunctional serine/threonine kinase and phosphorylase involved in the regulation of the pyruvate, phosphate dikinase (PPDK) by catalyzing its phosphorylation/dephosphorylation. The sequence is that of Putative pyruvate, phosphate dikinase regulatory protein from Streptococcus uberis (strain ATCC BAA-854 / 0140J).